The primary structure comprises 116 residues: Large ribosomal subunit protein uL18 (116 aa).

Belongs to the universal ribosomal protein uL18 family. As to quaternary structure, part of the 50S ribosomal subunit; part of the 5S rRNA/L5/L18/L25 subcomplex. Contacts the 5S and 23S rRNAs.

Its function is as follows. This is one of the proteins that bind and probably mediate the attachment of the 5S RNA into the large ribosomal subunit, where it forms part of the central protuberance. This chain is Large ribosomal subunit protein uL18, found in Shewanella loihica (strain ATCC BAA-1088 / PV-4).